The primary structure comprises 838 residues: Calmodulin-binding transcription activator 6 (838 aa).

The segment at residues 25 to 134 is a DNA-binding region (CG-1); the sequence is VQTMLEEAKS…YRDTQEAATT (110 aa). An ANK repeat occupies 525–554; sequence QGWTALHWAAYYGREKMVAALLSAGARPNL. IQ domains lie at 671-700, 713-742, and 788-817; these read SIIA…IQCR, MRRQ…SVGV, and LERS…THEE. The tract at residues 738–760 is calmodulin-binding; sequence WSVGVLEKAVLRWRQKRKGFRGL. Positions 802-822 form a coiled coil; sequence KKAQQDYRRMKLTHEEAQVNH.

This sequence belongs to the CAMTA family. As to expression, expressed in roots, stems, leaves, sepals, petals, stamen filaments, top of carpels, anthers and siliques, but not in stigmas.

Its subcellular location is the nucleus. In terms of biological role, transcription activator that binds calmodulin in a calcium-dependent manner in vitro. Binds to the DNA consensus sequence 5'-[ACG]CGCG[GTC]-3'. Regulates transcriptional activity in response to calcium signals. This is Calmodulin-binding transcription activator 6 from Arabidopsis thaliana (Mouse-ear cress).